Consider the following 339-residue polypeptide: UDP-N-acetylglucosamine--N-acetylmuramyl-(pentapeptide) pyrophosphoryl-undecaprenol N-acetylglucosamine transferase (339 aa).

UDP-N-acetyl-alpha-D-glucosamine is bound by residues 11-13 (TGG), N127, R170, S188, I235, and Q280.

It belongs to the glycosyltransferase 28 family. MurG subfamily.

Its subcellular location is the cell inner membrane. It catalyses the reaction di-trans,octa-cis-undecaprenyl diphospho-N-acetyl-alpha-D-muramoyl-L-alanyl-D-glutamyl-meso-2,6-diaminopimeloyl-D-alanyl-D-alanine + UDP-N-acetyl-alpha-D-glucosamine = di-trans,octa-cis-undecaprenyl diphospho-[N-acetyl-alpha-D-glucosaminyl-(1-&gt;4)]-N-acetyl-alpha-D-muramoyl-L-alanyl-D-glutamyl-meso-2,6-diaminopimeloyl-D-alanyl-D-alanine + UDP + H(+). Its pathway is cell wall biogenesis; peptidoglycan biosynthesis. Cell wall formation. Catalyzes the transfer of a GlcNAc subunit on undecaprenyl-pyrophosphoryl-MurNAc-pentapeptide (lipid intermediate I) to form undecaprenyl-pyrophosphoryl-MurNAc-(pentapeptide)GlcNAc (lipid intermediate II). The chain is UDP-N-acetylglucosamine--N-acetylmuramyl-(pentapeptide) pyrophosphoryl-undecaprenol N-acetylglucosamine transferase from Thermotoga maritima (strain ATCC 43589 / DSM 3109 / JCM 10099 / NBRC 100826 / MSB8).